Reading from the N-terminus, the 153-residue chain is Arachidonate 5-lipoxygenase-activating protein (153 aa).

The Lumenal segment spans residues 1–8; it reads MDQEAVGN. Residues 9 to 30 form a helical membrane-spanning segment; the sequence is VVLLAIVTLISVVQNGFFAHKV. The Cytoplasmic portion of the chain corresponds to 31 to 52; the sequence is EHESRNQNGRSFQRTGTLAFER. A helical membrane pass occupies residues 53 to 77; the sequence is VYTANQNCVDAYPTFLAVLWTAGLL. Over 78–80 the chain is Lumenal; sequence CSQ. Residues 81–102 traverse the membrane as a helical segment; that stretch reads VPAAFAGLMYLFVRQKYFVGYL. The Cytoplasmic portion of the chain corresponds to 103 to 107; the sequence is GERTQ. Residues 108–115 lie within the membrane without spanning it; sequence STPGYIFG. A helical transmembrane segment spans residues 116-128; the sequence is KRIILFLFLMSLA. At 129-153 the chain is on the lumenal side; the sequence is GILNYCLILLFGSDFENYIKTISTT.

The protein belongs to the MAPEG family. As to quaternary structure, homotrimer. Interacts with LTC4S and ALOX5.

Its subcellular location is the nucleus membrane. It localises to the endoplasmic reticulum membrane. Required for leukotriene biosynthesis by ALOX5 (5-lipoxygenase). Anchors ALOX5 to the membrane. Binds arachidonic acid, and could play an essential role in the transfer of arachidonic acid to ALOX5. Binds to MK-886, a compound that blocks the biosynthesis of leukotrienes. The protein is Arachidonate 5-lipoxygenase-activating protein (ALOX5AP) of Oryctolagus cuniculus (Rabbit).